Here is an 890-residue protein sequence, read N- to C-terminus: Possible lysine-specific histone demethylase 1 (890 aa).

Polar residues predominate over residues 1–13; the sequence is MKPTQFGGSSSKM. Residues 1 to 164 are disordered; it reads MKPTQFGGSS…TVLSGQEGAV (164 aa). Phosphoserine occurs at positions 24 and 27. The span at 84–109 shows a compositional bias: polar residues; that stretch reads NRPSGSGDTASNDKSGSASMGPNNQQ. Positions 110 to 122 are enriched in basic and acidic residues; that stretch reads AERRSQSQTRKSE. A compositionally biased stretch (low complexity) spans 123–138; it reads ANATSSSVSGPSAGNS. The SWIRM domain occupies 160 to 259; it reads QEGAVFQSRL…FGIFKRLKPI (100 aa). Residue 267–295 participates in FAD binding; it reads VIVIGAGISGLAVAHQLQQFGMDVIVLEA. A disordered region spans residues 860–890; the sequence is DLSPNLSDSSPSSKKSEENSNSNTADSTELQ. Positions 861–882 are enriched in low complexity; the sequence is LSPNLSDSSPSSKKSEENSNSN. Serine 866 carries the post-translational modification Phosphoserine.

It belongs to the flavin monoamine oxidase family. Component of a complex that contains at least HDAC1/Rpd3, CoRest and Su(var)3-3/Hdm. Requires FAD as cofactor.

The protein resides in the nucleus. It is found in the chromosome. Functionally, probable histone demethylase that specifically demethylates 'Lys-4' of histone H3, a specific tag for epigenetic transcriptional activation, thereby acting as a corepressor. Required for heterochromatic gene silencing. Acts by oxidizing the substrate by FAD to generate the corresponding imine that is subsequently hydrolyzed. Demethylates both mono- and tri-methylated 'Lys-4' of histone H3. May also demethylate 'Lys-9' of histone H3, Plays a role in the repression of neuronal genes. The polypeptide is Possible lysine-specific histone demethylase 1 (Su(var)3-3) (Drosophila melanogaster (Fruit fly)).